The chain runs to 309 residues: Tagatose-6-phosphate kinase (309 aa).

Belongs to the carbohydrate kinase PfkB family. LacC subfamily.

The catalysed reaction is D-tagatofuranose 6-phosphate + ATP = D-tagatofuranose 1,6-bisphosphate + ADP + H(+). It functions in the pathway carbohydrate metabolism; D-tagatose 6-phosphate degradation; D-glyceraldehyde 3-phosphate and glycerone phosphate from D-tagatose 6-phosphate: step 1/2. The protein is Tagatose-6-phosphate kinase of Streptococcus pyogenes serotype M3 (strain SSI-1).